The following is a 33-amino-acid chain: Photosystem II reaction center protein Psb30 (33 aa).

The chain crosses the membrane as a helical span at residues 5–25; sequence LIVQLGSLTLITIAGPLIVAL.

This sequence belongs to the Psb30/Ycf12 family. In terms of assembly, PSII is composed of 1 copy each of membrane proteins PsbA, PsbB, PsbC, PsbD, PsbE, PsbF, PsbH, PsbI, PsbJ, PsbK, PsbL, PsbM, PsbT, PsbY, PsbZ, Psb30/Ycf12, peripheral proteins of the oxygen-evolving complex and a large number of cofactors. It forms dimeric complexes.

Its subcellular location is the plastid. It localises to the chloroplast thylakoid membrane. Functionally, a core subunit of photosystem II (PSII), probably helps stabilize the reaction center. In Euglena mutabilis, this protein is Photosystem II reaction center protein Psb30.